The sequence spans 664 residues: DNA ligase (664 aa).

Residues D30 to D34, S79 to L80, and E109 each bind NAD(+). K111 serves as the catalytic N6-AMP-lysine intermediate. R132, E169, K284, and K308 together coordinate NAD(+). Zn(2+) is bound by residues C403, C406, C421, and C427. A BRCT domain is found at N586 to E664.

Belongs to the NAD-dependent DNA ligase family. LigA subfamily. The cofactor is Mg(2+). Requires Mn(2+) as cofactor.

It carries out the reaction NAD(+) + (deoxyribonucleotide)n-3'-hydroxyl + 5'-phospho-(deoxyribonucleotide)m = (deoxyribonucleotide)n+m + AMP + beta-nicotinamide D-nucleotide.. DNA ligase that catalyzes the formation of phosphodiester linkages between 5'-phosphoryl and 3'-hydroxyl groups in double-stranded DNA using NAD as a coenzyme and as the energy source for the reaction. It is essential for DNA replication and repair of damaged DNA. The sequence is that of DNA ligase from Parabacteroides distasonis (strain ATCC 8503 / DSM 20701 / CIP 104284 / JCM 5825 / NCTC 11152).